The following is a 92-amino-acid chain: Small ribosomal subunit protein uS19 (92 aa).

It belongs to the universal ribosomal protein uS19 family.

Its function is as follows. Protein S19 forms a complex with S13 that binds strongly to the 16S ribosomal RNA. The protein is Small ribosomal subunit protein uS19 of Acidovorax sp. (strain JS42).